The following is a 530-amino-acid chain: Probable flavin-containing monooxygenase 1 (530 aa).

Residues 17-21, glutamate 38, 46-47, and 58-59 contribute to the FAD site; these read GAGVS, VW, and QS. NADP(+) is bound at residue 219–222; sequence SAID.

The protein belongs to the FMO family. Requires FAD as cofactor.

Functionally, required for the establishment of systemic acquired resistance (SAR). Not involved in local defense mechanisms. Confers a salicylic acid-dependent (SA) resistance to virulent pathogens such as P.syringae pv tomato and H.parasitica. The protein is Probable flavin-containing monooxygenase 1 (FMO1) of Arabidopsis thaliana (Mouse-ear cress).